Reading from the N-terminus, the 237-residue chain is D-aminoacyl-tRNA deacylase (237 aa).

This sequence belongs to the DtdA deacylase family. Monomer. Zn(2+) serves as cofactor.

It catalyses the reaction a D-aminoacyl-tRNA + H2O = a tRNA + a D-alpha-amino acid + H(+). The enzyme catalyses glycyl-tRNA(Ala) + H2O = tRNA(Ala) + glycine + H(+). In terms of biological role, D-aminoacyl-tRNA deacylase with broad substrate specificity. By recycling D-aminoacyl-tRNA to D-amino acids and free tRNA molecules, this enzyme counteracts the toxicity associated with the formation of D-aminoacyl-tRNA entities in vivo. This Saccharolobus islandicus (strain Y.N.15.51 / Yellowstone #2) (Sulfolobus islandicus) protein is D-aminoacyl-tRNA deacylase.